Consider the following 151-residue polypeptide: Large-conductance mechanosensitive channel (151 aa).

3 helical membrane passes run 14 to 34 (VVDM…VNTL), 38 to 58 (VLMP…LYLI), and 86 to 106 (GLFL…FLLV).

This sequence belongs to the MscL family. Homopentamer.

It is found in the cell inner membrane. Functionally, channel that opens in response to stretch forces in the membrane lipid bilayer. May participate in the regulation of osmotic pressure changes within the cell. This chain is Large-conductance mechanosensitive channel, found in Pelodictyon phaeoclathratiforme (strain DSM 5477 / BU-1).